The primary structure comprises 181 residues: MLEAVSAVMSLGGMALFAGLGLGYAAKKFHVEADPVVEKLEALLPATNCGMCGHPGCGPYAQAITEGEAINLCTPGGKAVMESIAAMLGVSPAAMDDEGPKVAYIDEEACIGCTACIKVCPVDAIVGANKQSHTVIVAECTSCQLCLEPCPTDCITMQPVPENIYDWTWDKPAGPNSKALH.

The segment at 1–26 (MLEAVSAVMSLGGMALFAGLGLGYAA) is hydrophobic. A 4Fe-4S domain is found at 32–90 (EADPVVEKLEALLPATNCGMCGHPGCGPYAQAITEGEAINLCTPGGKAVMESIAAMLGV). [4Fe-4S] cluster is bound by residues C49, C52, C57, C73, C110, C113, C116, C120, C140, C143, C146, and C150. 4Fe-4S ferredoxin-type domains are found at residues 101 to 130 (KVAY…GANK) and 131 to 160 (QSHT…MQPV).

The protein belongs to the 4Fe4S bacterial-type ferredoxin family. RnfB subfamily. The complex is composed of six subunits: RnfA, RnfB, RnfC, RnfD, RnfE and RnfG. [4Fe-4S] cluster serves as cofactor.

It localises to the cell inner membrane. Part of a membrane-bound complex that couples electron transfer with translocation of ions across the membrane. This Magnetococcus marinus (strain ATCC BAA-1437 / JCM 17883 / MC-1) protein is Ion-translocating oxidoreductase complex subunit B.